A 388-amino-acid chain; its full sequence is Alcohol dehydrogenase-like 1 (388 aa).

Residues Cys-53, Thr-55, His-76, Cys-106, Cys-109, Cys-112, Cys-120, and Cys-185 each contribute to the Zn(2+) site. An alcohol contacts are provided by Thr-55 and His-76. Thr-55 is a binding site for NAD(+). Residues 210 to 215 (GLGAVG), Asp-234, Lys-239, 304 to 306 (LGM), Phe-331, and Arg-381 each bind NAD(+).

Belongs to the zinc-containing alcohol dehydrogenase family. Class-III subfamily. Homodimer. Zn(2+) is required as a cofactor.

It localises to the cytoplasm. The catalysed reaction is a primary alcohol + NAD(+) = an aldehyde + NADH + H(+). It carries out the reaction a secondary alcohol + NAD(+) = a ketone + NADH + H(+). In Arabidopsis thaliana (Mouse-ear cress), this protein is Alcohol dehydrogenase-like 1.